A 409-amino-acid chain; its full sequence is Nitrogen permease regulator 2 homolog (409 aa).

This sequence belongs to the NPR2 family.

The protein resides in the cytoplasm. The protein localises to the nucleus. Mediates inactivation of the TORC1 complex in response to amino acid starvation. Post-transcriptional regulator of nitrogen permeases. This is Nitrogen permease regulator 2 homolog from Schizosaccharomyces pombe (strain 972 / ATCC 24843) (Fission yeast).